Consider the following 65-residue polypeptide: UPF0434 protein bsr0601 (65 aa).

This sequence belongs to the UPF0434 family.

The sequence is that of UPF0434 protein bsr0601 from Bradyrhizobium diazoefficiens (strain JCM 10833 / BCRC 13528 / IAM 13628 / NBRC 14792 / USDA 110).